The sequence spans 40 residues: MITDVQLAIFSNVLGVFLFLLVVAYHYINANTGKSSIKTK.

Topologically, residues 1-4 are lumenal; sequence MITD. Residues 5 to 25 form a helical membrane-spanning segment; the sequence is VQLAIFSNVLGVFLFLLVVAY. Over 26-40 the chain is Cytoplasmic; it reads HYINANTGKSSIKTK.

The protein belongs to the OST4 family. In terms of assembly, component of the oligosaccharyltransferase (OST) complex.

It localises to the endoplasmic reticulum membrane. Its function is as follows. Subunit of the oligosaccharyl transferase (OST) complex that catalyzes the initial transfer of a defined glycan (Glc(3)Man(9)GlcNAc(2) in eukaryotes) from the lipid carrier dolichol-pyrophosphate to an asparagine residue within an Asn-X-Ser/Thr consensus motif in nascent polypeptide chains, the first step in protein N-glycosylation. N-glycosylation occurs cotranslationally and the complex associates with the Sec61 complex at the channel-forming translocon complex that mediates protein translocation across the endoplasmic reticulum (ER). All subunits are required for a maximal enzyme activity. The polypeptide is Dolichyl-diphosphooligosaccharide--protein glycosyltransferase subunit 4 (Drosophila virilis (Fruit fly)).